Reading from the N-terminus, the 610-residue chain is Elongation factor 4 (610 aa).

In terms of domain architecture, tr-type G spans 11–193 (EKIRNFSIIA…QIVEKVPAPT (183 aa)). Residues 23–28 (DHGKST) and 140–143 (NKID) contribute to the GTP site.

This sequence belongs to the TRAFAC class translation factor GTPase superfamily. Classic translation factor GTPase family. LepA subfamily.

The protein localises to the cell membrane. The enzyme catalyses GTP + H2O = GDP + phosphate + H(+). Required for accurate and efficient protein synthesis under certain stress conditions. May act as a fidelity factor of the translation reaction, by catalyzing a one-codon backward translocation of tRNAs on improperly translocated ribosomes. Back-translocation proceeds from a post-translocation (POST) complex to a pre-translocation (PRE) complex, thus giving elongation factor G a second chance to translocate the tRNAs correctly. Binds to ribosomes in a GTP-dependent manner. This Streptococcus pyogenes serotype M1 protein is Elongation factor 4.